A 353-amino-acid polypeptide reads, in one-letter code: Uroporphyrinogen decarboxylase (353 aa).

Residues 30–34 (RQAGR), D79, Y154, S209, and H332 contribute to the substrate site.

This sequence belongs to the uroporphyrinogen decarboxylase family. Homodimer.

Its subcellular location is the cytoplasm. It catalyses the reaction uroporphyrinogen III + 4 H(+) = coproporphyrinogen III + 4 CO2. The protein operates within porphyrin-containing compound metabolism; protoporphyrin-IX biosynthesis; coproporphyrinogen-III from 5-aminolevulinate: step 4/4. Catalyzes the decarboxylation of four acetate groups of uroporphyrinogen-III to yield coproporphyrinogen-III. The polypeptide is Uroporphyrinogen decarboxylase (Mycobacterium marinum (strain ATCC BAA-535 / M)).